Consider the following 93-residue polypeptide: Small ribosomal subunit protein uS19 (93 aa).

This sequence belongs to the universal ribosomal protein uS19 family.

In terms of biological role, protein S19 forms a complex with S13 that binds strongly to the 16S ribosomal RNA. The polypeptide is Small ribosomal subunit protein uS19 (Dehalococcoides mccartyi (strain ATCC BAA-2100 / JCM 16839 / KCTC 5957 / BAV1)).